Reading from the N-terminus, the 87-residue chain is U14-lycotoxin-Ls1a (87 aa).

The signal sequence occupies residues 1-20 (MNSKVFAVLLLLALLTCVLS). The region spanning 21–66 (EKYCPTPRNTSCKKMNIRNNCCRDSDCTSNAFCCAEPCGNFCHKAS) is the WAP domain. Intrachain disulfides connect Cys24/Cys54, Cys32/Cys58, Cys41/Cys53, Cys42/Cys80, and Cys47/Cys62.

It belongs to the venom protein 11 family. 01 (wap-1) subfamily. Post-translationally, contains 5 disulfide bonds. Expressed by the venom gland.

It is found in the secreted. In terms of biological role, has antibacterial activity. This is U14-lycotoxin-Ls1a from Lycosa singoriensis (Wolf spider).